A 232-amino-acid polypeptide reads, in one-letter code: Proteasome subunit alpha type-2 (232 aa).

The protein belongs to the peptidase T1A family. The 26S proteasome consists of a 20S proteasome core and two 19S regulatory subunits. The 20S proteasome core is composed of 28 subunits that are arranged in four stacked rings, resulting in a barrel-shaped structure. The two end rings are each formed by seven alpha subunits, and the two central rings are each formed by seven beta subunits. The catalytic chamber with the active sites is on the inside of the barrel.

The protein resides in the cytoplasm. The protein localises to the nucleus. Its function is as follows. The proteasome is a multicatalytic proteinase complex which is characterized by its ability to cleave peptides with Arg, Phe, Tyr, Leu, and Glu adjacent to the leaving group at neutral or slightly basic pH. The proteasome has an ATP-dependent proteolytic activity. The sequence is that of Proteasome subunit alpha type-2 (psmA2) from Dictyostelium discoideum (Social amoeba).